The following is a 351-amino-acid chain: Epoxyqueuosine reductase (351 aa).

The active-site Proton donor is Asp-131. The region spanning 177-205 is the 4Fe-4S ferredoxin-type domain; it reads EDQPVDYGCGSCTRCVDFCPTKALLGDGR. 8 residues coordinate [4Fe-4S] cluster: Cys-185, Cys-188, Cys-191, Cys-195, Cys-211, Cys-237, Cys-240, and Cys-244.

The protein belongs to the QueG family. In terms of assembly, monomer. The cofactor is cob(II)alamin. Requires [4Fe-4S] cluster as cofactor.

It localises to the cytoplasm. The enzyme catalyses epoxyqueuosine(34) in tRNA + AH2 = queuosine(34) in tRNA + A + H2O. The protein operates within tRNA modification; tRNA-queuosine biosynthesis. Catalyzes the conversion of epoxyqueuosine (oQ) to queuosine (Q), which is a hypermodified base found in the wobble positions of tRNA(Asp), tRNA(Asn), tRNA(His) and tRNA(Tyr). The chain is Epoxyqueuosine reductase from Lactococcus garvieae (strain Lg2) (Enterococcus seriolicida).